The primary structure comprises 556 residues: 2-succinyl-5-enolpyruvyl-6-hydroxy-3-cyclohexene-1-carboxylate synthase (556 aa).

It belongs to the TPP enzyme family. MenD subfamily. In terms of assembly, homodimer. Mg(2+) serves as cofactor. Mn(2+) is required as a cofactor. The cofactor is thiamine diphosphate.

It carries out the reaction isochorismate + 2-oxoglutarate + H(+) = 5-enolpyruvoyl-6-hydroxy-2-succinyl-cyclohex-3-ene-1-carboxylate + CO2. Its pathway is quinol/quinone metabolism; 1,4-dihydroxy-2-naphthoate biosynthesis; 1,4-dihydroxy-2-naphthoate from chorismate: step 2/7. It participates in quinol/quinone metabolism; menaquinone biosynthesis. Catalyzes the thiamine diphosphate-dependent decarboxylation of 2-oxoglutarate and the subsequent addition of the resulting succinic semialdehyde-thiamine pyrophosphate anion to isochorismate to yield 2-succinyl-5-enolpyruvyl-6-hydroxy-3-cyclohexene-1-carboxylate (SEPHCHC). This is 2-succinyl-5-enolpyruvyl-6-hydroxy-3-cyclohexene-1-carboxylate synthase from Staphylococcus haemolyticus (strain JCSC1435).